A 624-amino-acid chain; its full sequence is Pheromone-processing carboxypeptidase kex1 (624 aa).

The N-terminal stretch at 1–18 (MLGKALLLLLSSPICALA) is a signal peptide. The Lumenal portion of the chain corresponds to 19-504 (QSAADYYVKS…KDAEWKAYAK (486 aa)). N106 carries N-linked (GlcNAc...) asparagine glycosylation. Catalysis depends on residues S170 and D370. N-linked (GlcNAc...) asparagine glycans are attached at residues N421 and N429. Residue H432 is part of the active site. Residues 461–491 (PADSRLDGEKLPQTSVGNTTSSTSESDQVDQ) are disordered. Residues 472–486 (PQTSVGNTTSSTSES) are compositionally biased toward polar residues. Residue N478 is glycosylated (N-linked (GlcNAc...) asparagine). A helical membrane pass occupies residues 505 to 525 (SGEAALIVVIIGVSVWGFFIW). The Cytoplasmic portion of the chain corresponds to 526 to 624 (RARQRASRGS…IGNGAKSSLH (99 aa)). The disordered stretch occupies residues 533–624 (RGSSPSKKGY…IGNGAKSSLH (92 aa)). The span at 565–575 (FRNNTNNNASS) shows a compositional bias: polar residues. Acidic residues predominate over residues 606 to 615 (GEEDEEDEDI).

This sequence belongs to the peptidase S10 family.

It localises to the golgi apparatus. The protein localises to the trans-Golgi network membrane. The enzyme catalyses Preferential release of a C-terminal arginine or lysine residue.. Its function is as follows. Protease with a carboxypeptidase B-like function involved in the C-terminal processing of the lysine and arginine residues from protein precursors. Promotes cell fusion and is involved in the programmed cell death. In Talaromyces stipitatus (strain ATCC 10500 / CBS 375.48 / QM 6759 / NRRL 1006) (Penicillium stipitatum), this protein is Pheromone-processing carboxypeptidase kex1 (kex1).